The chain runs to 290 residues: Concanavalin-A (290 aa).

The signal sequence occupies residues 1-29 (MAISKKSSLFLPIFTFITMFLMVVNKVSS). 2 residues coordinate a carbohydrate: Asp-119 and Arg-139. Residue Asp-119 participates in Ca(2+) binding. Residues 149–163 (VIRNSTTIDFNAAYN) constitute a propeptide that is removed on maturation. The N-linked (GlcNAc...) asparagine glycan is linked to Asn-152. Mn(2+) contacts are provided by Glu-171 and Asp-173. Residues Asp-173, Tyr-175, Asn-177, and Asp-182 each contribute to the Ca(2+) site. 2 residues coordinate Mn(2+): Asp-182 and His-187. Position 262–263 (262–263 (LY)) interacts with a carbohydrate. A propeptide spanning residues 282–290 (EIPDIATVV) is cleaved from the precursor.

The protein belongs to the leguminous lectin family. In terms of assembly, homotetramer. In terms of processing, the mature chain consists of residues 164-281 followed by 30-148. To form a mature chain the precursor undergoes further post-translational modification after removal of the signal sequence; cleavage after Asn at positions Asn-148, Asn-163, and Asn-281 is followed by transposition and ligation (By formation of a new peptide bond) of residues 164-281 and 30-148.

Its function is as follows. Glucose/D-mannose/rhamnose specific lectin. Has hemagglutinating activity towards rabbit erythrocytes. Has mitogenic activity towards murine splenocytes that is inhibited by glucose. Inhibits HIV-1 reverse transcriptase with an IC(50) of 35 uM. Has a potent antiproliferative activity against L1210 leukemia cells in vitro that is not inhibited by glucose. Inhibits translation in cell-free rabbit reticulocyte system with an IC(50) of 2.08 uM. Lacks anti-fungal activity against M.arachidicola, B.cenera and F.oxysporum. The polypeptide is Concanavalin-A (Canavalia gladiata (Sword bean)).